The sequence spans 219 residues: Small ribosomal subunit protein uS3 (219 aa).

In terms of domain architecture, KH type-2 spans 39–108 (IKEFIKKNYF…KVTVKVQEIK (70 aa)).

It belongs to the universal ribosomal protein uS3 family. In terms of assembly, part of the 30S ribosomal subunit. Forms a tight complex with proteins S10 and S14.

In terms of biological role, binds the lower part of the 30S subunit head. Binds mRNA in the 70S ribosome, positioning it for translation. This Fusobacterium nucleatum subsp. nucleatum (strain ATCC 25586 / DSM 15643 / BCRC 10681 / CIP 101130 / JCM 8532 / KCTC 2640 / LMG 13131 / VPI 4355) protein is Small ribosomal subunit protein uS3.